A 217-amino-acid polypeptide reads, in one-letter code: Ras-related protein Rab-39A (217 aa).

Residues Ser17, Gly20, Lys21, Ser22, Cys23, and Thr44 each coordinate GTP. Ser22 contributes to the Mg(2+) binding site. The interval 39-47 (PACDPTVGV) is switch-I. 2 residues coordinate Mg(2+): Thr44 and Asp68. GTP is bound by residues Gly71, His127, Lys128, Asp130, Ala158, and Lys159. A switch-II region spans residues 71–87 (GQERFRSITRSYYRNSV). S-geranylgeranyl cysteine attachment occurs at residues Cys215 and Cys217. Cys217 is modified (cysteine methyl ester).

The protein belongs to the small GTPase superfamily. Rab family. As to quaternary structure, interacts (GDP-bound) with C9orf72; C9orf72 acts as a GEF for RAB39A. Interacts (GTP-bound) with HOPS complex components VPS39 and VPS41, and STX17; interaction between HOPS components and RAB39A contributes to obtaining a functional HOPS complex that promotes membrane fusion driven by STX17-SNAP29-VAMP8. Interacts with BECN1. Probably associates with the PI3K (PI3KC3/PI3K-III/class III phosphatidylinositol 3-kinase) complex. Interacts with UACA. Interacts with isoform a of RASSF1. Does not interact with isoform c of RASSF1. Mg(2+) serves as cofactor. Post-translationally, prenylated. Prenylation is required for association with cellular membranes.

The protein resides in the cell membrane. The protein localises to the cytoplasmic vesicle. It localises to the phagosome membrane. It is found in the late endosome membrane. Its subcellular location is the lysosome membrane. The protein resides in the autolysosome membrane. It carries out the reaction GTP + H2O = GDP + phosphate + H(+). With respect to regulation, regulated by guanine nucleotide exchange factors (GEFs) including c9Orf72, which promote the exchange of bound GDP for free GTP. Regulated by GTPase activating proteins (GAPs) which increase the GTP hydrolysis activity. Inhibited by GDP dissociation inhibitors (GDIs). The small GTPases Rab are key regulators of intracellular membrane trafficking, from the formation of transport vesicles to their fusion with membranes. Rabs cycle between an inactive GDP-bound form and an active GTP-bound form that is able to recruit to membranes different sets of downstream effectors directly responsible for vesicle formation, movement, tethering and fusion. RAB39A regulates autophagosome-lysosome fusion via recruitment of the HOPS endosomal tethering complex onto lysosomes; this process involves lysosomal RAB39A and autophagosomal RAB2A recruitment of HOPS subcomplexes VPS41-VPS16-VPS18-VPS33A and VPS39-VPS11, respectively, which assemble into a functional complex to mediate membrane tethering and SNAREs-driven membrane fusion. Also negatively regulates lipopolysaccharide (LPS)-induced autophagosome formation in macrophages, possibly by implicating PI3K. Promotes the delivery of MHC-I molecules from the ER to phagosomes and the generation of peptide-loaded MHC-I complexes in phagosomes, thus enhancing antigen cross-presentation by dendritic cells. Plays a role in the maturation and acidification of phagosomes that engulf pathogens, such as S.aureus and M.tuberculosis. Plays a role in the fusion of phagosomes with lysosomes. May be involved in multiple neurite formation. The polypeptide is Ras-related protein Rab-39A (Mus musculus (Mouse)).